The primary structure comprises 89 residues: UPF0250 protein CV_3095 (89 aa).

This sequence belongs to the UPF0250 family.

The chain is UPF0250 protein CV_3095 from Chromobacterium violaceum (strain ATCC 12472 / DSM 30191 / JCM 1249 / CCUG 213 / NBRC 12614 / NCIMB 9131 / NCTC 9757 / MK).